Reading from the N-terminus, the 95-residue chain is Opiscorpine-3 (95 aa).

A signal peptide spans 1-19 (MNNKLTALIFLGLLAIASC). Residues 55-95 (EFMCVANVDMTKSCDTHCQKASGEKGYCHGTKCKCGVPLSY) enclose the BetaSPN-type CS-alpha/beta domain. 3 cysteine pairs are disulfide-bonded: Cys-58-Cys-82, Cys-68-Cys-87, and Cys-72-Cys-89.

Belongs to the long chain scorpion toxin family. Class 3 subfamily. Expressed by the venom gland.

It is found in the secreted. In terms of biological role, has antimicrobial activity against yeasts and bacteria. This chain is Opiscorpine-3, found in Opistophthalmus carinatus (African yellow leg scorpion).